The following is a 214-amino-acid chain: Membrane-spanning 4-domains subfamily A member 3 (214 aa).

The segment at 1 to 31 is disordered; it reads MASHEVDNAELGSASAHGTPGSEAGPEELNT. The Cytoplasmic portion of the chain corresponds to 1–49; that stretch reads MASHEVDNAELGSASAHGTPGSEAGPEELNTSVYQPIDGSPDYQKAKLQ. Residues 50 to 70 form a helical membrane-spanning segment; that stretch reads VLGAIQILNAAMILALGVFLG. Over 71 to 81 the chain is Extracellular; that stretch reads SLQYPYHFQKH. The helical transmembrane segment at 82 to 102 threads the bilayer; it reads FFFFTFYTGYPIWGAVFFCSS. Residues 103–124 are Cytoplasmic-facing; the sequence is GTLSVVAGIKPTRTWIQNSFGM. The helical transmembrane segment at 125 to 145 threads the bilayer; sequence NIASATIALVGTAFLSLNIAV. Residues 146-175 are Extracellular-facing; the sequence is NIQSLRSCHSSSESPDLCNYMGSISNGMVS. A helical transmembrane segment spans residues 176-196; sequence LLLILTLLELCVTISTIAMWC. Topologically, residues 197 to 214 are cytoplasmic; the sequence is NANCCNSREEISSPPNSV.

This sequence belongs to the MS4A family. As to quaternary structure, interacts with CDKN3. Interacts with CDKN3-CDK2 complexes through its binding to CDKN3; this interaction facilitates dissociation of cyclin A from CDKN3-CDK2 complexes. As to expression, expressed specifically in hematopoietic cells and tissues.

Its subcellular location is the endomembrane system. The protein resides in the cytoplasm. The protein localises to the perinuclear region. In terms of biological role, hematopoietic modulator for the G1-S cell cycle transition. Modulates the level of phosphorylation of cyclin-dependent kinase 2 (CDK2) through its direct binding to cyclin-dependent kinase inhibitor 3 (CDKN3/KAP). The polypeptide is Membrane-spanning 4-domains subfamily A member 3 (MS4A3) (Homo sapiens (Human)).